We begin with the raw amino-acid sequence, 125 residues long: Large ribosomal subunit protein bL20 (125 aa).

This sequence belongs to the bacterial ribosomal protein bL20 family.

Functionally, binds directly to 23S ribosomal RNA and is necessary for the in vitro assembly process of the 50S ribosomal subunit. It is not involved in the protein synthesizing functions of that subunit. The chain is Large ribosomal subunit protein bL20 from Rhizorhabdus wittichii (strain DSM 6014 / CCUG 31198 / JCM 15750 / NBRC 105917 / EY 4224 / RW1) (Sphingomonas wittichii).